The chain runs to 409 residues: Elongation factor Tu (409 aa).

A tr-type G domain is found at 10-214 (KPHVNIGTIG…AVDSYIPDPE (205 aa)). The G1 stretch occupies residues 19-26 (GHVDHGKT). 19-26 (GHVDHGKT) is a GTP binding site. Position 26 (T26) interacts with Mg(2+). The segment at 60–64 (GITIN) is G2. A G3 region spans residues 81-84 (DCPG). GTP contacts are provided by residues 81-85 (DCPGH) and 136-139 (NKED). The interval 136-139 (NKED) is G4. The interval 174-176 (SGL) is G5.

In terms of assembly, monomer.

It is found in the cytoplasm. It catalyses the reaction GTP + H2O = GDP + phosphate + H(+). GTP hydrolase that promotes the GTP-dependent binding of aminoacyl-tRNA to the A-site of ribosomes during protein biosynthesis. The sequence is that of Elongation factor Tu from Nostoc sp. (strain PCC 7120 / SAG 25.82 / UTEX 2576).